The following is an 873-amino-acid chain: Zinc fingers and homeoboxes protein 1 (873 aa).

T36 is subject to Phosphothreonine. The disordered stretch occupies residues A41 to N63. Phosphoserine is present on residues S45, S47, and S48. Residues E50–N63 are compositionally biased toward basic and acidic residues. 2 C2H2-type zinc fingers span residues Y70–H93 and Y102–H125. Residue K159 forms a Glycyl lysine isopeptide (Lys-Gly) (interchain with G-Cter in SUMO2) linkage. Residues V198–A247 are disordered. S202 is subject to Phosphoserine. The span at E223 to T238 shows a compositional bias: low complexity. The required for dimerization stretch occupies residues N272–P432. Positions N272–F564 are required for interaction with NFYA. Positions N284–E346 form a DNA-binding region, homeobox 1. The segment at S429–E456 is disordered. Residues K441 and K485 each participate in a glycyl lysine isopeptide (Lys-Gly) (interchain with G-Cter in SUMO2) cross-link. The segment at residues S464 to Q526 is a DNA-binding region (homeobox 2). Disordered regions lie at residues D541–A568, D627–T668, and S731–N767. The segment at residues P569–I630 is a DNA-binding region (homeobox 3). K629 is covalently cross-linked (Glycyl lysine isopeptide (Lys-Gly) (interchain with G-Cter in SUMO2)). A Phosphoserine modification is found at S648. The homeobox 4 DNA-binding region spans G660–W722. The segment at L734–T768 is required for nuclear localization. Over residues L740–K764 the composition is skewed to basic residues. A Phosphoserine modification is found at S774. The homeobox 5 DNA-binding region spans K777 to F832. The interval I829–D873 is disordered. Residues L831–T857 are compositionally biased toward acidic residues. The tract at residues L831–D873 is required for repressor activity. The span at H863–D873 shows a compositional bias: basic residues.

Belongs to the ZHX family. Forms homodimers. Heterodimer (via HD1 domain) with ZHX2 (via HD1 domain). Also forms a heterodimer with ZHX3 which is a prerequisite for repressor activity. Interacts with ATF7IP and NFYA. Interacts (via homeobox domains) with DNMT3B (via PWWP domain). As to expression, widely expressed with highest levels in brain.

Its subcellular location is the nucleus. In terms of biological role, acts as a transcriptional repressor. Increases DNMT3B-mediated repressive transcriptional activity when DNMT3B is tethered to DNA. May link molecule between DNMT3B and other co-repressor proteins. In Mus musculus (Mouse), this protein is Zinc fingers and homeoboxes protein 1 (Zhx1).